A 453-amino-acid chain; its full sequence is MGEKKPETLDFVKDFQEYLTQQTHHVNMISGSVSSDKEAETLQGGTQNHDALSANSPCLALPAAATDSDQNGLDHPSVEVSLDESAGMLVDGFERTFDGKLKCRYCNYASKGTARLIEHIRIHTGEKPHRCHLCPFASAYERHLEAHMRSHTGEKPYKCELCSFRCSDRSNLSHHRRRKHKMLPIKGTRPSLGNKKMWGVLQKKVSSLGYTRRTLINLSPPSMVVHKADYLSDFAHEIPSIQSEAYEHLAKASHSVGLSRDPQELMVDNPLNQLSTLAGQLSSLPPDTQNPASPDTGPCPDEKPFMIQQPPPPACSSAVSTSVAQSSSPASPEGRPSHNHRNCSPMAGPSSERSGRTSTPSISNSQPSTPAPALPVQDPQLLHHCQHCDMYFADNILYTIHMGCHGFENPFQCNICGCKCKNKYDFACHFARGACCQHSSRCAFRRTDDHVTK.

3 C2H2-type zinc fingers span residues 101 to 123 (LKCRYCNYASKGTARLIEHIRIH), 129 to 151 (HRCHLCPFASAYERHLEAHMRSH), and 157 to 180 (YKCELCSFRCSDRSNLSHHRRRKH). Over residues 279–293 (GQLSSLPPDTQNPAS) the composition is skewed to polar residues. The disordered stretch occupies residues 279-375 (GQLSSLPPDT…QPSTPAPALP (97 aa)). Over residues 315-332 (CSSAVSTSVAQSSSPASP) the composition is skewed to low complexity. The segment covering 356-368 (RTSTPSISNSQPS) has biased composition (polar residues). C2H2-type zinc fingers lie at residues 383 to 405 (HHCQHCDMYFADNILYTIHMGCH) and 411 to 438 (FQCNICGCKCKNKYDFACHFARGACCQH).

The protein belongs to the Ikaros C2H2-type zinc-finger protein family. Probably self-associates.

The protein resides in the nucleus. In terms of biological role, transcriptional repressor that binds the core 5'GNNTGTNG-3' DNA consensus sequence. In Xenopus laevis (African clawed frog), this protein is Zinc finger protein Pegasus (ikzf5).